The following is a 198-amino-acid chain: Nucleoid occlusion factor SlmA (198 aa).

An HTH tetR-type domain is found at 9–70 (RNRREEILQA…SLIEFIEDSL (62 aa)). The segment at residues 33-52 (TTAKLAANVGVSEAALYRHF) is a DNA-binding region (H-T-H motif). Residues 119–144 (DRLQGRINQLFERIEMQLRQVLREKK) are a coiled coil.

The protein belongs to the nucleoid occlusion factor SlmA family. As to quaternary structure, homodimer. Interacts with FtsZ.

The protein localises to the cytoplasm. It localises to the nucleoid. In terms of biological role, required for nucleoid occlusion (NO) phenomenon, which prevents Z-ring formation and cell division over the nucleoid. Acts as a DNA-associated cell division inhibitor that binds simultaneously chromosomal DNA and FtsZ, and disrupts the assembly of FtsZ polymers. SlmA-DNA-binding sequences (SBS) are dispersed on non-Ter regions of the chromosome, preventing FtsZ polymerization at these regions. This chain is Nucleoid occlusion factor SlmA, found in Yersinia pseudotuberculosis serotype I (strain IP32953).